The chain runs to 341 residues: Methionine import ATP-binding protein MetN 2 (341 aa).

One can recognise an ABC transporter domain in the interval 2-241; sequence IELKEVVKEY…PQHTVTKRFV (240 aa). ATP is bound at residue 38 to 45; sequence GFSGAGKS.

It belongs to the ABC transporter superfamily. Methionine importer (TC 3.A.1.24) family. As to quaternary structure, the complex is composed of two ATP-binding proteins (MetN), two transmembrane proteins (MetI) and a solute-binding protein (MetQ).

It is found in the cell membrane. It catalyses the reaction L-methionine(out) + ATP + H2O = L-methionine(in) + ADP + phosphate + H(+). It carries out the reaction D-methionine(out) + ATP + H2O = D-methionine(in) + ADP + phosphate + H(+). Its function is as follows. Part of the ABC transporter complex MetNIQ involved in methionine import. Responsible for energy coupling to the transport system. In Staphylococcus aureus (strain bovine RF122 / ET3-1), this protein is Methionine import ATP-binding protein MetN 2.